A 255-amino-acid polypeptide reads, in one-letter code: Phosphatidylcholine synthase (255 aa).

At 1–13 (MNPIKPPFTLNQY) the chain is on the cytoplasmic side. The chain crosses the membrane as a helical span at residues 14 to 34 (FAAWFVHVFTASAACIGVFSL). The Periplasmic segment spans residues 35–42 (YKIYQHDY). The helical transmembrane segment at 43-63 (VFALWLMAITVFIDAVDGSLA) threads the bilayer. Topologically, residues 64 to 76 (RLVHVKSVLPKID) are cytoplasmic. A helical membrane pass occupies residues 77-97 (GALLDNIVDYLNYVITPCFFL). Over 98–103 (LVKPGM) the chain is Periplasmic. A helical transmembrane segment spans residues 104–124 (LPADYVVPITAAITITSAYQF). The Cytoplasmic segment spans residues 125-133 (CQDDAKTPD). The chain crosses the membrane as a helical span at residues 134–154 (HFFKGFPCYWNITVFYMYIFN). A topological domain (periplasmic) is located at residue Thr-155. Residues 156 to 175 (SMIVNTVLLSLFCVLIFIPV) form a helical membrane-spanning segment. Topologically, residues 176 to 190 (KYVYPSRLDYLTESR) are cytoplasmic. Residues 191-211 (VLKILMHCCSALYGISSFCLL) form a helical membrane-spanning segment. Residues 212 to 217 (VNYPET) lie on the Periplasmic side of the membrane. The chain crosses the membrane as a helical span at residues 218-238 (NKLWVSLSLGYVGMYLFLSFY). Over 239 to 255 (RTYYPMFKAKITANNKD) the chain is Cytoplasmic.

The protein belongs to the CDP-alcohol phosphatidyltransferase class-I family. Mn(2+) is required as a cofactor.

The protein resides in the cell inner membrane. The enzyme catalyses a CDP-1,2-diacyl-sn-glycerol + choline = a 1,2-diacyl-sn-glycero-3-phosphocholine + CMP + H(+). Its function is as follows. Condenses choline with CDP-diglyceride to produce phosphatidylcholine and CMP. Affects virulence of this bacterium when there is a complete loss of phosphatidylcholine formation due to absence of both the synthase (pcs) and the methylation (pmtA) pathways. Reduced virulence results from lowered yields of bacteria within host macrophages and because of loss of high multiplicity cytotoxicity. The chain is Phosphatidylcholine synthase from Legionella pneumophila subsp. pneumophila (strain Philadelphia 1 / ATCC 33152 / DSM 7513).